Reading from the N-terminus, the 161-residue chain is Endoribonuclease YbeY (161 aa).

Zn(2+) contacts are provided by His-121, His-125, and His-131.

Belongs to the endoribonuclease YbeY family. Zn(2+) is required as a cofactor.

Its subcellular location is the cytoplasm. In terms of biological role, single strand-specific metallo-endoribonuclease involved in late-stage 70S ribosome quality control and in maturation of the 3' terminus of the 16S rRNA. The protein is Endoribonuclease YbeY of Xylella fastidiosa (strain 9a5c).